The primary structure comprises 296 residues: Large ribosomal subunit protein uL18B (296 aa).

Residues 251–296 (PVHEKKPKKEVKKKRWNRAKLSLEQKKDRVAQKKASFLRAQEKADS) form a disordered region. Over residues 255-268 (KKPKKEVKKKRWNR) the composition is skewed to basic residues. Residues 271–281 (LSLEQKKDRVA) show a composition bias toward basic and acidic residues.

It belongs to the universal ribosomal protein uL18 family. In terms of assembly, component of the large ribosomal subunit (LSU). Part of a LSU subcomplex, the 5S RNP which is composed of the 5S RNA, RPL5 and RPL11.

It localises to the cytoplasm. It is found in the nucleus. The protein resides in the nucleolus. Its function is as follows. Component of the ribosome, a large ribonucleoprotein complex responsible for the synthesis of proteins in the cell. The small ribosomal subunit (SSU) binds messenger RNAs (mRNAs) and translates the encoded message by selecting cognate aminoacyl-transfer RNA (tRNA) molecules. The large subunit (LSU) contains the ribosomal catalytic site termed the peptidyl transferase center (PTC), which catalyzes the formation of peptide bonds, thereby polymerizing the amino acids delivered by tRNAs into a polypeptide chain. The nascent polypeptides leave the ribosome through a tunnel in the LSU and interact with protein factors that function in enzymatic processing, targeting, and the membrane insertion of nascent chains at the exit of the ribosomal tunnel. As part of the 5S RNP/5S ribonucleoprotein particle it is an essential component of the LSU, required for its formation and the maturation of rRNAs. It also couples ribosome biogenesis to p53/TP53 activation. As part of the 5S RNP it accumulates in the nucleoplasm and inhibits MDM2, when ribosome biogenesis is perturbed, mediating the stabilization and the activation of TP53. In Xenopus laevis (African clawed frog), this protein is Large ribosomal subunit protein uL18B (rpl5-b).